We begin with the raw amino-acid sequence, 471 residues long: Alpha-galactosidase 6 (471 aa).

Positions 1–18 (MFAFYFLTACISLKGVFG) are cleaved as a signal peptide. Cys-42 and Cys-74 form a disulfide bridge. Residues Asp-72 and Asp-73 each contribute to the substrate site. A glycan (N-linked (GlcNAc...) asparagine) is linked at Asn-105. Cys-121 and Cys-151 are disulfide-bonded. Substrate is bound at residue Lys-147. Catalysis depends on Asp-149, which acts as the Nucleophile. Asn-175 carries an N-linked (GlcNAc...) asparagine glycan. A substrate-binding site is contributed by Arg-205. Asp-209 (proton donor) is an active-site residue. Intrachain disulfides connect Cys-221–Cys-237 and Cys-223–Cys-230. Gln-251 contacts substrate. 6 N-linked (GlcNAc...) asparagine glycosylation sites follow: Asn-270, Asn-370, Asn-403, Asn-422, Asn-435, and Asn-454.

It belongs to the glycosyl hydrolase 27 family. Homotetramer.

The protein resides in the secreted. The enzyme catalyses Hydrolysis of terminal, non-reducing alpha-D-galactose residues in alpha-D-galactosides, including galactose oligosaccharides, galactomannans and galactolipids.. The sequence is that of Alpha-galactosidase 6 (MEL6) from Saccharomyces cerevisiae (Baker's yeast).